The following is a 474-amino-acid chain: Glycogen synthase (474 aa).

K15 lines the ADP-alpha-D-glucose pocket.

Belongs to the glycosyltransferase 1 family. Bacterial/plant glycogen synthase subfamily.

The enzyme catalyses [(1-&gt;4)-alpha-D-glucosyl](n) + ADP-alpha-D-glucose = [(1-&gt;4)-alpha-D-glucosyl](n+1) + ADP + H(+). It functions in the pathway glycan biosynthesis; glycogen biosynthesis. Its function is as follows. Synthesizes alpha-1,4-glucan chains using ADP-glucose. The chain is Glycogen synthase from Chlamydia trachomatis serovar D (strain ATCC VR-885 / DSM 19411 / UW-3/Cx).